We begin with the raw amino-acid sequence, 483 residues long: Regulatory protein ViaA (483 aa).

This sequence belongs to the ViaA family. In terms of assembly, homodimer. Interacts with RavA.

Its subcellular location is the cytoplasm. Component of the RavA-ViaA chaperone complex, which may act on the membrane to optimize the function of some of the respiratory chains. ViaA stimulates the ATPase activity of RavA. In Escherichia coli O7:K1 (strain IAI39 / ExPEC), this protein is Regulatory protein ViaA.